The chain runs to 293 residues: Hydroxyquinol 1,2-dioxygenase (293 aa).

4 residues coordinate Fe cation: Tyr-164, Tyr-197, His-221, and His-223.

This sequence belongs to the intradiol ring-cleavage dioxygenase family. In terms of assembly, homodimer. Fe(3+) serves as cofactor.

The catalysed reaction is benzene-1,2,4-triol + O2 = maleylacetate + 2 H(+). Its pathway is aromatic compound metabolism; beta-ketoadipate pathway; 3-oxoadipate from 3,4-dihydroxybenzoate: step 2/4. With respect to regulation, inhibited by 3,5-dichlorocatechol, chlorohydroquinone and 4,5-dibromocatechol. Functionally, catalyzes the ortho-cleavage of the aromatic ring of hydroxyquinol. This is Hydroxyquinol 1,2-dioxygenase (chqB) from Nocardioides simplex (Arthrobacter simplex).